Consider the following 454-residue polypeptide: tRNA modification GTPase MnmE (454 aa).

Residues R23, E80, and K120 each contribute to the (6S)-5-formyl-5,6,7,8-tetrahydrofolate site. The region spanning G216–G377 is the TrmE-type G domain. Position 226 (N226) interacts with K(+). GTP-binding positions include N226 to S231, T245 to T251, D270 to G273, N335 to D338, and S358 to R360. Residue S230 coordinates Mg(2+). K(+)-binding residues include T245, I247, and T250. T251 contributes to the Mg(2+) binding site. Residue K454 participates in (6S)-5-formyl-5,6,7,8-tetrahydrofolate binding.

The protein belongs to the TRAFAC class TrmE-Era-EngA-EngB-Septin-like GTPase superfamily. TrmE GTPase family. As to quaternary structure, homodimer. Heterotetramer of two MnmE and two MnmG subunits. Requires K(+) as cofactor.

It localises to the cytoplasm. Exhibits a very high intrinsic GTPase hydrolysis rate. Involved in the addition of a carboxymethylaminomethyl (cmnm) group at the wobble position (U34) of certain tRNAs, forming tRNA-cmnm(5)s(2)U34. This chain is tRNA modification GTPase MnmE, found in Salmonella gallinarum (strain 287/91 / NCTC 13346).